An 81-amino-acid chain; its full sequence is RNA-binding protein Hfq (81 aa).

Residues 10–69 form the Sm domain; it reads DPFLNTLRREHVPVSIYLVNGIKLQGQIESFDQYVVLLRNTVTQMVYKHAISTIVPGRAV.

The protein belongs to the Hfq family. In terms of assembly, homohexamer.

Functionally, RNA chaperone that binds small regulatory RNA (sRNAs) and mRNAs to facilitate mRNA translational regulation in response to envelope stress, environmental stress and changes in metabolite concentrations. Also binds with high specificity to tRNAs. This is RNA-binding protein Hfq from Variovorax paradoxus (strain S110).